Consider the following 182-residue polypeptide: IQ domain-containing protein F1 (182 aa).

Basic and acidic residues-rich tracts occupy residues 1–10 (MGEEQQKPEE) and 31–43 (ETEK…KQEL). A disordered region spans residues 1–43 (MGEEQQKPEELNAPTDDAPQEKQQPADLSSETEKAKSKKKQEL). 2 consecutive IQ domains span residues 45–74 (EKDQ…SAWI) and 101–130 (EQWA…AVRT).

As to quaternary structure, interacts with calmodulin. As to expression, specifically expressed in testes and mature spermatozoa (at protein level).

The protein resides in the cytoplasmic vesicle. It is found in the secretory vesicle. The protein localises to the acrosome. Involved in sperm capacitation and acrosome reaction. This Mus musculus (Mouse) protein is IQ domain-containing protein F1.